The sequence spans 490 residues: Fumitremorgin C monooxygenase (490 aa).

A helical transmembrane segment spans residues 12-32 (LGVVGASLIVILGIILLFPLG). Cys442 is a binding site for heme.

Belongs to the cytochrome P450 family. Heme is required as a cofactor.

Its subcellular location is the membrane. It carries out the reaction fumitremorgin C + 2 reduced [NADPH--hemoprotein reductase] + 2 O2 = 12alpha,13alpha-dihydroxyfumitremorgin C + 2 oxidized [NADPH--hemoprotein reductase] + 2 H2O + 2 H(+). Its pathway is mycotoxin biosynthesis. Functionally, cytochrome P450 monooxygenase; part of the gene cluster that mediates the biosynthesis of fumitremorgins, indole alkaloids that carry not only intriguing chemical structures, but also interesting biological and pharmacological activities. The biosynthesis of fumitremorgin-type alkaloids begins by condensation of the two amino acids L-tryptophan and L-proline to brevianamide F, catalyzed by the non-ribosomal peptide synthetase ftmA. Brevianamide F is then prenylated by the prenyltransferase ftmPT1/ftmB in the presence of dimethylallyl diphosphate, resulting in the formation of tryprostatin B. The three cytochrome P450 monooxygenases, ftmP450-1/ftmC, ftmP450-2/ftmE and ftmP450-3/FtmG, are responsible for the conversion of tryprostatin B to 6-hydroxytryprostatin B, tryprostatin A to fumitremorgin C and fumitremorgin C to 12,13-dihydroxyfumitremorgin C, respectively. The putative methyltransferase ftmMT/ftmD is expected for the conversion of 6-hydroxytryprostatin B to tryprostatin A. FtmPT2/FtmH catalyzes the prenylation of 12,13-dihydroxyfumitre-morgin C in the presence of dimethylallyl diphosphate, resulting in the formation of fumitremorgin B. Fumitremorgin B is further converted to verruculogen by ftmOx1/ftmF via the insertion of an endoperoxide bond between the two prenyl moieties. In some fungal species, verruculogen is further converted to fumitremorgin A, but the enzymes involved in this step have not been identified yet. This chain is Fumitremorgin C monooxygenase, found in Aspergillus fumigatus (strain ATCC MYA-4609 / CBS 101355 / FGSC A1100 / Af293) (Neosartorya fumigata).